The primary structure comprises 90 residues: uncharacterized protein (90 aa).

Positions 1 to 26 (MFESEAELRRIRIALVWIAVFLLFGA) are cleaved as a signal peptide.

This is an uncharacterized protein from Bacillus subtilis (strain 168).